Here is a 263-residue protein sequence, read N- to C-terminus: HTH-type transcriptional repressor NanR (263 aa).

The interval 1 to 25 (MDVMNAFDSQAEDSPTSLGRSLRRR) is disordered. The HTH gntR-type domain maps to 30-98 (KKLSEMVEEE…NGERARVSRP (69 aa)). A DNA-binding region (H-T-H motif) is located at residues 58-77 (ERELMAFFNVGRPSVREALA).

It belongs to the NanR family.

Its function is as follows. Transcriptional repressor that controls expression of the genes required for the catabolism of sialic acids. This is HTH-type transcriptional repressor NanR from Salmonella choleraesuis (strain SC-B67).